Reading from the N-terminus, the 307-residue chain is tRNA dimethylallyltransferase (307 aa).

7–14 is an ATP binding site; it reads GPTAGGKT. 9 to 14 contacts substrate; sequence TAGGKT. The tract at residues 32–35 is interaction with substrate tRNA; it reads DSRQ.

This sequence belongs to the IPP transferase family. As to quaternary structure, monomer. Requires Mg(2+) as cofactor.

It carries out the reaction adenosine(37) in tRNA + dimethylallyl diphosphate = N(6)-dimethylallyladenosine(37) in tRNA + diphosphate. Catalyzes the transfer of a dimethylallyl group onto the adenine at position 37 in tRNAs that read codons beginning with uridine, leading to the formation of N6-(dimethylallyl)adenosine (i(6)A). This Elusimicrobium minutum (strain Pei191) protein is tRNA dimethylallyltransferase.